The following is a 282-amino-acid chain: HTH-type transcriptional activator RhaR (282 aa).

The HTH araC/xylS-type domain maps to 179–277 (DKLITALANS…GMTPSQWRHL (99 aa)). 2 DNA-binding regions (H-T-H motif) span residues 196-217 (DAFCQQEQCSERVLRQQFRAQT) and 244-267 (ISEISMQCGFEDSNYFSVVFTRET).

Binds DNA as a dimer.

It localises to the cytoplasm. Functionally, activates expression of the rhaSR operon in response to L-rhamnose. In Salmonella typhimurium (strain LT2 / SGSC1412 / ATCC 700720), this protein is HTH-type transcriptional activator RhaR.